The following is a 368-amino-acid chain: Homoserine O-acetyltransferase (368 aa).

The AB hydrolase-1 domain occupies 43–346 (ILLEHALTGT…EYGHDAFLVE (304 aa)). The Nucleophile role is filled by S145. R212 contacts substrate. Residues D307 and H340 contribute to the active site. D341 provides a ligand contact to substrate.

The protein belongs to the AB hydrolase superfamily. MetX family. Homodimer.

The protein localises to the cytoplasm. It carries out the reaction L-homoserine + acetyl-CoA = O-acetyl-L-homoserine + CoA. Its pathway is amino-acid biosynthesis; L-methionine biosynthesis via de novo pathway; O-acetyl-L-homoserine from L-homoserine: step 1/1. Functionally, transfers an acetyl group from acetyl-CoA to L-homoserine, forming acetyl-L-homoserine. In Listeria monocytogenes serovar 1/2a (strain ATCC BAA-679 / EGD-e), this protein is Homoserine O-acetyltransferase.